The sequence spans 367 residues: Chorismate synthase (367 aa).

NADP(+) is bound at residue arginine 48. Residues 125 to 127 (RSS), glycine 284, 299 to 303 (KPTPS), and arginine 325 each bind FMN.

The protein belongs to the chorismate synthase family. As to quaternary structure, homotetramer. Requires FMNH2 as cofactor.

It catalyses the reaction 5-O-(1-carboxyvinyl)-3-phosphoshikimate = chorismate + phosphate. The protein operates within metabolic intermediate biosynthesis; chorismate biosynthesis; chorismate from D-erythrose 4-phosphate and phosphoenolpyruvate: step 7/7. Catalyzes the anti-1,4-elimination of the C-3 phosphate and the C-6 proR hydrogen from 5-enolpyruvylshikimate-3-phosphate (EPSP) to yield chorismate, which is the branch point compound that serves as the starting substrate for the three terminal pathways of aromatic amino acid biosynthesis. This reaction introduces a second double bond into the aromatic ring system. In Lachnoclostridium phytofermentans (strain ATCC 700394 / DSM 18823 / ISDg) (Clostridium phytofermentans), this protein is Chorismate synthase.